The primary structure comprises 424 residues: 3-oxo-tetronate kinase (424 aa).

Residues serine 260, 364-367 (GGET), and glycine 407 each bind ATP.

Belongs to the four-carbon acid sugar kinase family.

It catalyses the reaction 3-dehydro-L-erythronate + ATP = 3-dehydro-4-O-phospho-L-erythronate + ADP + H(+). It carries out the reaction 3-dehydro-D-erythronate + ATP = 3-dehydro-4-O-phospho-D-erythronate + ADP + H(+). Its function is as follows. Catalyzes the ATP-dependent phosphorylation of 3-oxo-tetronate to 3-oxo-tetronate 4-phosphate. The polypeptide is 3-oxo-tetronate kinase (Pectobacterium atrosepticum (strain SCRI 1043 / ATCC BAA-672) (Erwinia carotovora subsp. atroseptica)).